The following is a 143-amino-acid chain: Nucleoside diphosphate kinase (143 aa).

Positions 11, 59, 87, 93, 104, and 114 each coordinate ATP. The active-site Pros-phosphohistidine intermediate is His117.

Belongs to the NDK family. In terms of assembly, homotetramer. Mg(2+) is required as a cofactor.

Its subcellular location is the cytoplasm. It carries out the reaction a 2'-deoxyribonucleoside 5'-diphosphate + ATP = a 2'-deoxyribonucleoside 5'-triphosphate + ADP. The catalysed reaction is a ribonucleoside 5'-diphosphate + ATP = a ribonucleoside 5'-triphosphate + ADP. Functionally, major role in the synthesis of nucleoside triphosphates other than ATP. The ATP gamma phosphate is transferred to the NDP beta phosphate via a ping-pong mechanism, using a phosphorylated active-site intermediate. This Colwellia psychrerythraea (strain 34H / ATCC BAA-681) (Vibrio psychroerythus) protein is Nucleoside diphosphate kinase.